A 294-amino-acid chain; its full sequence is P32 adhesin (294 aa).

2 consecutive transmembrane segments (helical) span residues Leu-11–Thr-31 and Val-66–Ile-86. 2 repeat units span residues Gly-172–Met-193 and Gly-194–Met-214. The segment at Gly-172 to Met-214 is 2 X 22 AA repeats. Residues Arg-234 to Arg-294 form a disordered region. A compositionally biased stretch (gly residues) spans Pro-241–Asn-256.

The protein localises to the cell projection. Its subcellular location is the attachment organelle membrane. Its function is as follows. Adhesin necessary for successful cytadherence and virulence. This chain is P32 adhesin (mgc2), found in Mycoplasmoides gallisepticum (strain R(low / passage 15 / clone 2)) (Mycoplasma gallisepticum).